The primary structure comprises 215 residues: MASATLPAWIKMPSFLKKILKLRGRRQEDESRSRMLSDSSTQSYQVNQLTSEGTEAGSTIPSTPSKGQALPTESKVRAREKSRHRRPKIIDQVRRVESLGEQASQRQKHMLETLINKIYTGPLGEELVQTLYLRIWAMEETPESLKILQMREDIRDQVLKMKTERWLRTLIRGEKTKLKDFQKRYEEVHPYLMKEKVEQIIMEEAWSLAAHIVQE.

Positions 12 to 34 are disordered; the sequence is MPSFLKKILKLRGRRQEDESRSR. An involved in self-degradation and in host STAT1 degradation region spans residues 15–22; it reads FLKKILKL. Residues 25–35 show a composition bias toward basic and acidic residues; it reads RRQEDESRSRM. Polar residues predominate over residues 36–66; sequence LSDSSTQSYQVNQLTSEGTEAGSTIPSTPSK.

This sequence belongs to the respirovirus protein C family. The different isoforms interact (via C-terminus) with unphosphorylated and phosphorylated human STAT1 (via N-terminus), favoring the formation of parallel STAT1 homodimers. The different isoforms do not interact with host STAT2. C protein interacts with L protein; this interaction has an inhibitory effect on viral transcription and replication. In terms of processing, protein Y1 is produced not only by alternative initiation, but also by proteolytic cleavage of C'. Only alternative initiation is detected in vitro, whereas in vivo cleavage seems to be predominant.

It is found in the host cytoplasm. In terms of biological role, the different products prevent the establishment of cellular antiviral state by blocking the interferon-alpha/beta (IFN-alpha/beta) and IFN-gamma signaling pathways. They inhibit IFN-alpha/beta induced tyrosine phosphorylation of STAT1 and STAT2. Blocking the IFN-alpha/beta pathway requires binding to STAT1 in the cytoplasm. They inhibit IFN-gamma induced serine phosphorylation of STAT1. Block the IFN-gamma pathway by binding to and stabilizing the parallel form of the STAT1 dimer, further inducing high-molecular-weight complex formation and inhibition of transcription by IFN-gamma. May also have a role in preventing the cell to enter apoptosis. Modulate regulation of viral transcription and replication. Overexpression inhibits the viral RNA polymerase. The absence of all C', C and Y1 proteins leads to viral delayed growth. Plays an important role in virion particles release. Modulates virion shape. The chain is Protein C' (P/V/C) from Sendai virus (strain Ohita) (SeV).